Consider the following 273-residue polypeptide: 4-hydroxy-tetrahydrodipicolinate reductase (273 aa).

NAD(+) contacts are provided by residues 12 to 17 (GAGGRM) and Glu38. An NADP(+)-binding site is contributed by Arg39. NAD(+) is bound by residues 102-104 (GTT) and 126-129 (AANF). His159 serves as the catalytic Proton donor/acceptor. His160 provides a ligand contact to (S)-2,3,4,5-tetrahydrodipicolinate. Catalysis depends on Lys163, which acts as the Proton donor. Residue 169-170 (GT) coordinates (S)-2,3,4,5-tetrahydrodipicolinate.

Belongs to the DapB family. As to quaternary structure, homotetramer.

The protein localises to the cytoplasm. The enzyme catalyses (S)-2,3,4,5-tetrahydrodipicolinate + NAD(+) + H2O = (2S,4S)-4-hydroxy-2,3,4,5-tetrahydrodipicolinate + NADH + H(+). It catalyses the reaction (S)-2,3,4,5-tetrahydrodipicolinate + NADP(+) + H2O = (2S,4S)-4-hydroxy-2,3,4,5-tetrahydrodipicolinate + NADPH + H(+). Its pathway is amino-acid biosynthesis; L-lysine biosynthesis via DAP pathway; (S)-tetrahydrodipicolinate from L-aspartate: step 4/4. Functionally, catalyzes the conversion of 4-hydroxy-tetrahydrodipicolinate (HTPA) to tetrahydrodipicolinate. The chain is 4-hydroxy-tetrahydrodipicolinate reductase from Klebsiella pneumoniae (strain 342).